The chain runs to 40 residues: Dolichyl-diphosphooligosaccharide--protein glycosyltransferase subunit 4 (40 aa).

The Lumenal portion of the chain corresponds to 1–4 (MITD). A helical transmembrane segment spans residues 5-25 (VQLAIFSNVLGVFLFLLVVAY). Residues 26 to 40 (HYINANTGKIGPKAK) are Cytoplasmic-facing.

This sequence belongs to the OST4 family. In terms of assembly, component of the oligosaccharyltransferase (OST) complex.

It localises to the endoplasmic reticulum membrane. Subunit of the oligosaccharyl transferase (OST) complex that catalyzes the initial transfer of a defined glycan (Glc(3)Man(9)GlcNAc(2) in eukaryotes) from the lipid carrier dolichol-pyrophosphate to an asparagine residue within an Asn-X-Ser/Thr consensus motif in nascent polypeptide chains, the first step in protein N-glycosylation. N-glycosylation occurs cotranslationally and the complex associates with the Sec61 complex at the channel-forming translocon complex that mediates protein translocation across the endoplasmic reticulum (ER). All subunits are required for a maximal enzyme activity. The sequence is that of Dolichyl-diphosphooligosaccharide--protein glycosyltransferase subunit 4 from Drosophila willistoni (Fruit fly).